We begin with the raw amino-acid sequence, 1022 residues long: D-2-hydroxyglutarate dehydrogenase (1022 aa).

In terms of domain architecture, FAD-binding PCMH-type spans 53–286 (YQLLPDAVLF…SEARLDITPL (234 aa)). 2 residues coordinate (R)-2-hydroxyglutarate: R407 and H505. The region spanning 667–700 (FSHEVKEAMSGCLACKACSTQCPIKIDVPAFRSR) is the 4Fe-4S ferredoxin-type domain. Residues C678, C681, C684, and C688 each coordinate [4Fe-4S] cluster.

It in the N-terminal section; belongs to the FAD-binding oxidoreductase/transferase type 4 family. As to quaternary structure, homotetramer. [4Fe-4S] cluster is required as a cofactor. Requires FAD as cofactor.

It carries out the reaction (R)-2-hydroxyglutarate + A = 2-oxoglutarate + AH2. With respect to regulation, activity is completely inhibited by the addition of 0.5 mM Mn(2+), Ni(2+), or Co(2+) and partially inhibited by 0.5 mM Zn(2+). Catalyzes the oxidation of D-2-hydroxyglutarate (D-2-HGA) to 2-oxoglutarate. Appears to be the only D2HGDH in P.ananatis, providing the way to recycle D-2-HGA produced during L-serine synthesis by SerA, by converting it back to 2-oxoglutarate. Is involved in the utilization of D-2-HGA, that can support the growth of P.ananatis as a sole carbon source, although it barely serves as a good substrate. The physiological molecule that functions as the primary electron acceptor during D-2-HGA oxidation by YdiJ in P.ananatis is unknown. Shows strict substrate specificity towards D-2-HGA, since it has no detectable activity on L-2-hydroxyglutarate, L-malate, D-malate, L-lactate, D-lactate, L-tartrate, D-tartrate, L-glycerate, D-glycerate, glutarate, or pyruvate. The polypeptide is D-2-hydroxyglutarate dehydrogenase (Pantoea ananatis (strain AJ13355)).